A 70-amino-acid polypeptide reads, in one-letter code: Translational regulator CsrA (70 aa).

This sequence belongs to the CsrA/RsmA family. In terms of assembly, homodimer; the beta-strands of each monomer intercalate to form a hydrophobic core, while the alpha-helices form wings that extend away from the core.

Its subcellular location is the cytoplasm. Its function is as follows. A key translational regulator that binds mRNA to regulate translation initiation and/or mRNA stability. Mediates global changes in gene expression, shifting from rapid growth to stress survival by linking envelope stress, the stringent response and the catabolite repression systems. Usually binds in the 5'-UTR; binding at or near the Shine-Dalgarno sequence prevents ribosome-binding, repressing translation, binding elsewhere in the 5'-UTR can activate translation and/or stabilize the mRNA. Its function is antagonized by small RNA(s). The polypeptide is Translational regulator CsrA (Hydrogenovibrio crunogenus (strain DSM 25203 / XCL-2) (Thiomicrospira crunogena)).